Consider the following 67-residue polypeptide: MDWNRVEGNWKQMKGKVKEQWGKLTDDDLDVINGKREQLEGKIQERYGYEKDRTKKDIDDWYGRQGW.

This sequence belongs to the UPF0337 (CsbD) family.

This chain is UPF0337 protein Atu4724, found in Agrobacterium fabrum (strain C58 / ATCC 33970) (Agrobacterium tumefaciens (strain C58)).